The following is a 180-amino-acid chain: Large ribosomal subunit protein uL10 (180 aa).

Belongs to the universal ribosomal protein uL10 family. As to quaternary structure, part of the ribosomal stalk of the 50S ribosomal subunit. The N-terminus interacts with L11 and the large rRNA to form the base of the stalk. The C-terminus forms an elongated spine to which L12 dimers bind in a sequential fashion forming a multimeric L10(L12)X complex.

Forms part of the ribosomal stalk, playing a central role in the interaction of the ribosome with GTP-bound translation factors. The protein is Large ribosomal subunit protein uL10 of Thermosipho melanesiensis (strain DSM 12029 / CIP 104789 / BI429).